An 86-amino-acid polypeptide reads, in one-letter code: Serine protease inhibitor Kazal-type 2 (86 aa).

Residues 1 to 16 (MLRLVLLLLVTDFAAS) form the signal peptide. Positions 32-86 (QFRTPDCGHFDFPACPRNLNPVCGTDMNTYSNECTLCMKIREDGSHINIIKDEPC) constitute a Kazal-like domain. 3 disulfides stabilise this stretch: C38-C68, C46-C65, and C54-C86.

In terms of tissue distribution, expressed in sperm (at protein level). Expressed in testis but not in ovary, brain, heart, kidney or lung. Within testis, expressed in epididymis and germ cells.

It localises to the secreted. It is found in the cytoplasmic vesicle. The protein localises to the secretory vesicle. The protein resides in the acrosome. Its function is as follows. As a strong inhibitor of acrosin, it is required for normal spermiogenesis. It probably hinders premature activation of proacrosin and other proteases, thus preventing the cascade of events leading to spermiogenesis defects. May be involved in the regulation of serine protease-dependent germ cell apoptosis. It also inhibits trypsin. This Mus musculus (Mouse) protein is Serine protease inhibitor Kazal-type 2 (Spink2).